Reading from the N-terminus, the 196-residue chain is Large ribosomal subunit protein uL18 (196 aa).

It belongs to the universal ribosomal protein uL18 family. Part of the 50S ribosomal subunit. Contacts the 5S and 23S rRNAs.

Its function is as follows. This is one of the proteins that bind and probably mediate the attachment of the 5S RNA into the large ribosomal subunit, where it forms part of the central protuberance. This Sulfurisphaera tokodaii (strain DSM 16993 / JCM 10545 / NBRC 100140 / 7) (Sulfolobus tokodaii) protein is Large ribosomal subunit protein uL18.